The chain runs to 93 residues: Stromal cell-derived factor 1 (93 aa).

The signal sequence occupies residues 1 to 21 (MDAKVVAVLALVLAALCLSDG). Residues 22 to 23 (KP) carry the Receptor activation motif motif. The receptor and heparin binding stretch occupies residues 29–33 (RCPCR). Intrachain disulfides connect Cys-30-Cys-55 and Cys-32-Cys-71. 3 receptor binding regions span residues 39-41 (VAR), 48-50 (KIL), and 60-70 (VARLKNNNRQV). Heparin is bound by residues 41 to 51 (RANVKHLKILN), Arg-62, Gln-69, and Lys-85.

This sequence belongs to the intercrine alpha (chemokine CxC) family. In terms of assembly, monomer or homodimer; in equilibrium. Dimer formation is induced by non acidic pH and the presence of multivalent anions, and by binding to CXCR4 or heparin. Monomeric form is required for full chemotactic activity and resistance to ischemia/reperfusion injury, whereas the dimeric form acts as a partial agonist of CXCR4, stimulating Ca2+ mobilization but with no chemotactic activity and instead acts as a selective antagonist that blocks chemotaxis induced by the monomeric form. Interacts with the N-terminus of ACKR3. Interacts with integrin subunit ITGB3 (via the allosteric site (site 2)). Interacts with TNFAIP6 (via Link domain).

The protein resides in the secreted. In terms of biological role, chemoattractant active on T-lymphocytes and monocytes but not neutrophils. Activates the C-X-C chemokine receptor CXCR4 to induce a rapid and transient rise in the level of intracellular calcium ions and chemotaxis. Also binds to atypical chemokine receptor ACKR3, which activates the beta-arrestin pathway and acts as a scavenger receptor for SDF-1. Acts as a positive regulator of monocyte migration and a negative regulator of monocyte adhesion via the LYN kinase. Binds to the allosteric site (site 2) of integrins and activates integrins ITGAV:ITGB3, ITGA4:ITGB1 and ITGA5:ITGB1 in a CXCR4-independent manner. Stimulates migration of monocytes and T-lymphocytes through its receptors, CXCR4 and ACKR3, and decreases monocyte adherence to surfaces coated with ICAM-1, a ligand for beta-2 integrins. SDF1A/CXCR4 signaling axis inhibits beta-2 integrin LFA-1 mediated adhesion of monocytes to ICAM-1 through LYN kinase. Plays a protective role after myocardial infarction. Has several critical functions during embryonic development; required for B-cell lymphopoiesis, myelopoiesis in bone marrow and heart ventricular septum formation. Stimulates the proliferation of bone marrow-derived B-cell progenitors in the presence of IL7 as well as growth of stromal cell-dependent pre-B-cells. The polypeptide is Stromal cell-derived factor 1 (CXCL12) (Felis catus (Cat)).